Reading from the N-terminus, the 406-residue chain is Phosphopentomutase (406 aa).

Mn(2+) contacts are provided by D10, D305, H310, D346, H347, and H358.

Belongs to the phosphopentomutase family. Mn(2+) serves as cofactor.

The protein resides in the cytoplasm. It catalyses the reaction 2-deoxy-alpha-D-ribose 1-phosphate = 2-deoxy-D-ribose 5-phosphate. It carries out the reaction alpha-D-ribose 1-phosphate = D-ribose 5-phosphate. It functions in the pathway carbohydrate degradation; 2-deoxy-D-ribose 1-phosphate degradation; D-glyceraldehyde 3-phosphate and acetaldehyde from 2-deoxy-alpha-D-ribose 1-phosphate: step 1/2. Functionally, isomerase that catalyzes the conversion of deoxy-ribose 1-phosphate (dRib-1-P) and ribose 1-phosphate (Rib-1-P) to deoxy-ribose 5-phosphate (dRib-5-P) and ribose 5-phosphate (Rib-5-P), respectively. The protein is Phosphopentomutase of Rhizobium leguminosarum bv. trifolii (strain WSM2304).